The chain runs to 993 residues: Isoleucine--tRNA ligase (993 aa).

A 'HIGH' region motif is present at residues 64–74 (PYANGNIHIGH). E621 lines the L-isoleucyl-5'-AMP pocket. Residues 662–666 (KMSKS) carry the 'KMSKS' region motif. K665 contributes to the ATP binding site.

It belongs to the class-I aminoacyl-tRNA synthetase family. IleS type 1 subfamily. Monomer.

The protein localises to the cytoplasm. It catalyses the reaction tRNA(Ile) + L-isoleucine + ATP = L-isoleucyl-tRNA(Ile) + AMP + diphosphate. Functionally, catalyzes the attachment of isoleucine to tRNA(Ile). As IleRS can inadvertently accommodate and process structurally similar amino acids such as valine, to avoid such errors it has two additional distinct tRNA(Ile)-dependent editing activities. One activity is designated as 'pretransfer' editing and involves the hydrolysis of activated Val-AMP. The other activity is designated 'posttransfer' editing and involves deacylation of mischarged Val-tRNA(Ile). This Mesorhizobium japonicum (strain LMG 29417 / CECT 9101 / MAFF 303099) (Mesorhizobium loti (strain MAFF 303099)) protein is Isoleucine--tRNA ligase.